The primary structure comprises 262 residues: Dihydroorotate dehydrogenase B (NAD(+)), electron transfer subunit (262 aa).

The region spanning Ser-2–Leu-102 is the FAD-binding FR-type domain. Residues Arg-53 to Ser-56, Leu-70 to Arg-72, and Gly-77 to Thr-78 contribute to the FAD site. Cys-224, Cys-229, Cys-232, and Cys-248 together coordinate [2Fe-2S] cluster.

Belongs to the PyrK family. Heterotetramer of 2 PyrK and 2 PyrD type B subunits. However, the metal reductase complex seems to be composed of a heterooctamer of 4 PyrK and 4 PyrD subunits. Requires FAD as cofactor. [2Fe-2S] cluster is required as a cofactor.

It is found in the cytoplasm. It functions in the pathway pyrimidine metabolism; UMP biosynthesis via de novo pathway; orotate from (S)-dihydroorotate (NAD(+) route): step 1/1. In terms of biological role, responsible for channeling the electrons from the oxidation of dihydroorotate from the FMN redox center in the PyrD type B subunit to the ultimate electron acceptor NAD(+). Its function is as follows. Together with PyrD, also forms a metal reductase complex able to reduce Fe(III)-chelates to Fe(II)-chelates, as well as soluble Cr(VI) and U(VI), using NADH as electron donor. To a lesser extent, can also use NADPH as an electron donor. Is unable to reduce riboflavin and FMN with NADH as electron donor. May have an in vivo role in metal reduction in D.reducens, which is an organism capable of reducing contaminant heavy metals and radionuclides. In Desulforamulus reducens (strain ATCC BAA-1160 / DSM 100696 / MI-1) (Desulfotomaculum reducens), this protein is Dihydroorotate dehydrogenase B (NAD(+)), electron transfer subunit.